The chain runs to 150 residues: uncharacterized protein (150 aa).

Residues 1–21 (MAMEMAMMGLLGTVVGASAMG) form the signal peptide.

This is an uncharacterized protein from Mycobacterium tuberculosis (strain CDC 1551 / Oshkosh).